Consider the following 479-residue polypeptide: Proline--tRNA ligase 2 (479 aa).

The protein belongs to the class-II aminoacyl-tRNA synthetase family. ProS type 3 subfamily. Homodimer.

It is found in the cytoplasm. The catalysed reaction is tRNA(Pro) + L-proline + ATP = L-prolyl-tRNA(Pro) + AMP + diphosphate. Catalyzes the attachment of proline to tRNA(Pro) in a two-step reaction: proline is first activated by ATP to form Pro-AMP and then transferred to the acceptor end of tRNA(Pro). The protein is Proline--tRNA ligase 2 of Rhodococcus jostii (strain RHA1).